A 766-amino-acid polypeptide reads, in one-letter code: Serine/threonine-protein kinase B-raf (766 aa).

Residues 1 to 13 (MAALSGGGGGGAE) are compositionally biased toward gly residues. Residues 1 to 38 (MAALSGGGGGGAEPGQALFNGDMEPEAGAGAGAAASSA) form a disordered region. Alanine 2 carries the N-acetylalanine modification. Residue serine 151 is modified to Phosphoserine. The region spanning 155 to 227 (PIVRVFLPNK…TGEELHVEVL (73 aa)) is the RBD domain. The Phorbol-ester/DAG-type zinc-finger motif lies at 234–280 (THNFVRKTFFTLAFCDFCRKLLFQGFRCQTCGYKFHQRCSTEVPLMC). Residues histidine 235, cysteine 248, cysteine 251, cysteine 261, cysteine 264, histidine 269, cysteine 272, and cysteine 280 each contribute to the Zn(2+) site. The segment at 308-454 (AETALTSGSS…DSSDDWEIPD (147 aa)) is disordered. Low complexity predominate over residues 314-341 (SGSSPSAPASDSIGPQILTSPSPSKSIP). Position 333 is a phosphoserine (serine 333). Residues 348–363 (PADEDHRNQFGQRDRS) show a composition bias toward basic and acidic residues. Serine 365 is subject to Phosphoserine; by SGK1. Threonine 373 carries the post-translational modification Phosphothreonine; by autocatalysis. Residue threonine 396 is modified to Phosphothreonine. Serine 399 is subject to Phosphoserine. The residue at position 401 (threonine 401) is a Phosphothreonine. Residues 423 to 447 (QRERKSSSSSEDRNRMKTLGRRDSS) show a composition bias toward basic and acidic residues. A phosphoserine mark is found at serine 446 and serine 447. A Protein kinase domain is found at 457–717 (ITVGQRIGSG…PQILASIELL (261 aa)). ATP is bound by residues 463 to 471 (IGSGSFGTV) and lysine 483. Residue aspartate 576 is the Proton acceptor of the active site. Lysine 578 is covalently cross-linked (Glycyl lysine isopeptide (Lys-Gly) (interchain with G-Cter in ubiquitin)). Arginine 671 is subject to Omega-N-methylarginine; by PRMT5. 2 positions are modified to phosphoserine: serine 729 and serine 750. Residue threonine 753 is modified to Phosphothreonine; by MAPK1.

The protein belongs to the protein kinase superfamily. TKL Ser/Thr protein kinase family. RAF subfamily. As to quaternary structure, monomer. Homodimer. Heterodimerizes with RAF1, and the heterodimer possesses a highly increased kinase activity compared to the respective homodimers or monomers. Heterodimerization is mitogen-regulated and enhanced by 14-3-3 proteins. MAPK1/ERK2 activation can induce a negative feedback that promotes the dissociation of the heterodimer by phosphorylating BRAF at Thr-753. Heterodimerizes (via N-terminus) with KSR1 (via N-terminus) or KSR2 (via N-terminus) in a MAP2K1-dependent manner. Interacts with MAP2K1 and MAP2K2. Found in a complex with at least BRAF, HRAS, MAP2K1, MAPK3 and RGS14. Interacts with RIT1. Interacts (via N-terminus) with RGS14 (via RBD domains); the interaction mediates the formation of a ternary complex with RAF1, a ternary complex inhibited by GNAI1. Interacts with DGKH. Interacts with PRMT5. Interacts with KSR2. Interacts with AKAP13, MAP2K1 and KSR1. Identified in a complex with AKAP13, MAP2K1 and KSR1. Interacts with FNIP1 and FNIP2. It depends on Zn(2+) as a cofactor. Phosphorylation at Ser-365 by SGK1 inhibits its activity. Phosphorylation at Thr-753 by MAPK1. Dephosphorylation of Ser-365 by the SHOC2-MRAS-PP1c (SMP) complex consisting of SHOC2, GTP-bound M-Ras/MRAS and the catalytic subunit of protein phosphatase 1 (PPP1CA, PPP1CB or PPP1CC); this relieves inactivation and stimulates kinase activity. Post-translationally, methylation at Arg-671 decreases stability and kinase activity. In terms of processing, ubiquitinated by RNF149; which leads to proteasomal degradation. Polyubiquitinated at Lys-578 in response to EGF. In terms of tissue distribution, brain and testis.

It is found in the nucleus. It localises to the cytoplasm. Its subcellular location is the cell membrane. The catalysed reaction is L-seryl-[protein] + ATP = O-phospho-L-seryl-[protein] + ADP + H(+). The enzyme catalyses L-threonyl-[protein] + ATP = O-phospho-L-threonyl-[protein] + ADP + H(+). Its activity is regulated as follows. In quiescent cells, maintained in an inactive state via an intramolecular interaction between the protein kinase and N-terminal domains. Following mitogen-mediated cell activation, binds via its RGB domain to active HRAS (GTP-bound) which releases the inhibitory intramolecular interaction between the two domains. This allows the MAP2K1-mediated dimerization of KSR1 or KSR2, and BRAF which activates BRAF. Functionally, protein kinase involved in the transduction of mitogenic signals from the cell membrane to the nucleus. Phosphorylates MAP2K1, and thereby activates the MAP kinase signal transduction pathway. Phosphorylates PFKFB2. May play a role in the postsynaptic responses of hippocampal neurons. In Homo sapiens (Human), this protein is Serine/threonine-protein kinase B-raf.